Consider the following 386-residue polypeptide: Succinate--CoA ligase [ADP-forming] subunit beta (386 aa).

The region spanning 9–244 (KAVLRSYGVS…LEEEDSKEIE (236 aa)) is the ATP-grasp domain. Residues lysine 46, 53 to 55 (GRG), glutamate 99, cysteine 102, and glutamate 107 each bind ATP. Positions 199 and 213 each coordinate Mg(2+). Substrate is bound by residues asparagine 264 and 321-323 (GIM).

It belongs to the succinate/malate CoA ligase beta subunit family. As to quaternary structure, heterotetramer of two alpha and two beta subunits. The cofactor is Mg(2+).

It catalyses the reaction succinate + ATP + CoA = succinyl-CoA + ADP + phosphate. The catalysed reaction is GTP + succinate + CoA = succinyl-CoA + GDP + phosphate. The protein operates within carbohydrate metabolism; tricarboxylic acid cycle; succinate from succinyl-CoA (ligase route): step 1/1. Succinyl-CoA synthetase functions in the citric acid cycle (TCA), coupling the hydrolysis of succinyl-CoA to the synthesis of either ATP or GTP and thus represents the only step of substrate-level phosphorylation in the TCA. The beta subunit provides nucleotide specificity of the enzyme and binds the substrate succinate, while the binding sites for coenzyme A and phosphate are found in the alpha subunit. The sequence is that of Succinate--CoA ligase [ADP-forming] subunit beta from Bacillus mycoides (strain KBAB4) (Bacillus weihenstephanensis).